Reading from the N-terminus, the 88-residue chain is Putative defensin-like protein 228 (88 aa).

The N-terminal stretch at 1-27 (MMKSAILLMVSCVFMFLVVSYIQDVEG) is a signal peptide. Cystine bridges form between C32-C88, C42-C66, C50-C82, and C64-C84.

Belongs to the DEFL family.

Its subcellular location is the secreted. This chain is Putative defensin-like protein 228 (SCRL3), found in Arabidopsis thaliana (Mouse-ear cress).